The following is a 294-amino-acid chain: tRNA dimethylallyltransferase (294 aa).

10-17 (GPTAVGKT) provides a ligand contact to ATP. 12-17 (TAVGKT) serves as a coordination point for substrate. The tract at residues 35-38 (DSQQ) is interaction with substrate tRNA.

The protein belongs to the IPP transferase family. In terms of assembly, monomer. Mg(2+) is required as a cofactor.

The enzyme catalyses adenosine(37) in tRNA + dimethylallyl diphosphate = N(6)-dimethylallyladenosine(37) in tRNA + diphosphate. Functionally, catalyzes the transfer of a dimethylallyl group onto the adenine at position 37 in tRNAs that read codons beginning with uridine, leading to the formation of N6-(dimethylallyl)adenosine (i(6)A). This chain is tRNA dimethylallyltransferase, found in Streptococcus gordonii (strain Challis / ATCC 35105 / BCRC 15272 / CH1 / DL1 / V288).